Here is a 94-residue protein sequence, read N- to C-terminus: Large ribosomal subunit protein eL31 (94 aa).

The protein belongs to the eukaryotic ribosomal protein eL31 family.

The protein is Large ribosomal subunit protein eL31 (rpl31e) of Pyrococcus abyssi (strain GE5 / Orsay).